The chain runs to 130 residues: Small ribosomal subunit protein uS9 (130 aa).

A disordered region spans residues 106 to 130; sequence RDSRKVERKKPGLKKARKASQFSKR. Over residues 111 to 130 the composition is skewed to basic residues; it reads VERKKPGLKKARKASQFSKR.

This sequence belongs to the universal ribosomal protein uS9 family.

This Streptococcus pneumoniae (strain ATCC 700669 / Spain 23F-1) protein is Small ribosomal subunit protein uS9.